The sequence spans 151 residues: 6,7-dimethyl-8-ribityllumazine synthase (151 aa).

5-amino-6-(D-ribitylamino)uracil contacts are provided by residues F18, 49–51, and 74–76; these read ALE and CVI. (2S)-2-hydroxy-3-oxobutyl phosphate is bound at residue 79-80; it reads ET. H82 acts as the Proton donor in catalysis. A 5-amino-6-(D-ribitylamino)uracil-binding site is contributed by N107. R121 provides a ligand contact to (2S)-2-hydroxy-3-oxobutyl phosphate.

This sequence belongs to the DMRL synthase family.

It catalyses the reaction (2S)-2-hydroxy-3-oxobutyl phosphate + 5-amino-6-(D-ribitylamino)uracil = 6,7-dimethyl-8-(1-D-ribityl)lumazine + phosphate + 2 H2O + H(+). Its pathway is cofactor biosynthesis; riboflavin biosynthesis; riboflavin from 2-hydroxy-3-oxobutyl phosphate and 5-amino-6-(D-ribitylamino)uracil: step 1/2. Functionally, catalyzes the formation of 6,7-dimethyl-8-ribityllumazine by condensation of 5-amino-6-(D-ribitylamino)uracil with 3,4-dihydroxy-2-butanone 4-phosphate. This is the penultimate step in the biosynthesis of riboflavin. The sequence is that of 6,7-dimethyl-8-ribityllumazine synthase from Bartonella tribocorum (strain CIP 105476 / IBS 506).